The primary structure comprises 334 residues: MIPVLVAAGVAFLVTLVLGPVVIPLLHRLRFGQRVRSDGPTRHLQKTGTPTMGGVIFLFGAAAAVLVVAFLPGGVRAGWIEGLLVLAVALGFGVLGFMDDFAKVVHKRSLGLRAREKLLGQVLIAVALAVTAVFVLERGTDFLVPFSGIVVHGGLALDLGWWFFLGVTVFVVLATANAVNLTDGLDGLAAGTFAVAALAFAMIALVMDKTWVGIVLGALVGGCVGFLCYNFYPARVFMGDTGSLALGGGLSAAAVITKSELFLLIIGGVFVIETLSVIIQVIWYQLTGRRVFRMSPLHHHFELVGWSETRVVLTFWTVGLVLAVLGLAGLKGLG.

10 helical membrane passes run 2 to 22 (IPVL…GPVV), 55 to 75 (VIFL…PGGV), 78 to 98 (GWIE…LGFM), 116 to 136 (EKLL…VFVL), 154 to 174 (GLAL…VVLA), 187 to 207 (GLAA…ALVM), 211 to 231 (WVGI…CYNF), 236 to 256 (VFMG…AAVI), 262 to 282 (FLLI…IQVI), and 311 to 331 (VVLT…AGLK).

This sequence belongs to the glycosyltransferase 4 family. MraY subfamily. It depends on Mg(2+) as a cofactor.

It localises to the cell membrane. It catalyses the reaction UDP-N-acetyl-alpha-D-muramoyl-L-alanyl-gamma-D-glutamyl-meso-2,6-diaminopimeloyl-D-alanyl-D-alanine + di-trans,octa-cis-undecaprenyl phosphate = di-trans,octa-cis-undecaprenyl diphospho-N-acetyl-alpha-D-muramoyl-L-alanyl-D-glutamyl-meso-2,6-diaminopimeloyl-D-alanyl-D-alanine + UMP. The protein operates within cell wall biogenesis; peptidoglycan biosynthesis. Its function is as follows. Catalyzes the initial step of the lipid cycle reactions in the biosynthesis of the cell wall peptidoglycan: transfers peptidoglycan precursor phospho-MurNAc-pentapeptide from UDP-MurNAc-pentapeptide onto the lipid carrier undecaprenyl phosphate, yielding undecaprenyl-pyrophosphoryl-MurNAc-pentapeptide, known as lipid I. This is Phospho-N-acetylmuramoyl-pentapeptide-transferase from Desulforudis audaxviator (strain MP104C).